Consider the following 375-residue polypeptide: Heat-inducible transcription repressor HrcA (375 aa).

Over residues Ala-307–Ser-318 the composition is skewed to low complexity. The segment at Ala-307–Ala-331 is disordered.

The protein belongs to the HrcA family.

Its function is as follows. Negative regulator of class I heat shock genes (grpE-dnaK-dnaJ and groELS operons). Prevents heat-shock induction of these operons. The chain is Heat-inducible transcription repressor HrcA from Bifidobacterium adolescentis (strain ATCC 15703 / DSM 20083 / NCTC 11814 / E194a).